The primary structure comprises 78 residues: Protein SlyX homolog (78 aa).

It belongs to the SlyX family.

This chain is Protein SlyX homolog, found in Photobacterium profundum (strain SS9).